The sequence spans 20 residues: Putative 60 kDa spermidine-binding protein (20 aa).

The disordered stretch occupies residues 1–20 (SXAAVVEPPETSQNRIAKGE). Over residues 10-20 (ETSQNRIAKGE) the composition is skewed to polar residues.

As to quaternary structure, dimer of 18 kDa and 60 kDa subunit.

The protein resides in the microsome membrane. Its subcellular location is the endoplasmic reticulum membrane. Its function is as follows. May have spermidine-binding activity. The chain is Putative 60 kDa spermidine-binding protein from Zea mays (Maize).